The sequence spans 234 residues: Probable chemoreceptor glutamine deamidase CheD (234 aa).

It belongs to the CheD family.

The enzyme catalyses L-glutaminyl-[protein] + H2O = L-glutamyl-[protein] + NH4(+). Its function is as follows. Probably deamidates glutamine residues to glutamate on methyl-accepting chemotaxis receptors (MCPs), playing an important role in chemotaxis. The polypeptide is Probable chemoreceptor glutamine deamidase CheD (Burkholderia pseudomallei (strain 1710b)).